Here is a 462-residue protein sequence, read N- to C-terminus: MVNKNAIILAAGKGTRMKSKLYKVLHEVCGRPMVDHVLTEVEKTEPATVVTIVGHGAEKVKDYLGDRSQYALQAEQLGTGHAVLQAEDLLKDQDGITIVVSGDTPLLTAGTFEKLFAYHHDKGAKATILTATAPDPTGYGRIIRNDIGIVEKIVEQKDTNDKEAAVNEINTGVYCFDNKTLFQALHEVTNENAQGEYYLTDVVEILKKKGEIVAAYKMPNFEESMGVNDRVALSQATKVMRQRINTAHMRNGVTLIDPESTYIEVGVKIGNDTIIEPNVVLKGNTTIGSDCFVGAGSTIIDSTIEDNIQITSSTIESAIMHTGSNIGPNSHLRPNAEIGVDVHVGNFCEVKNAKIGDRTKIGHLSYVGDATLGTDINVGCGVVFVNYDGVAKHHANVGSHVFIGSNSNIVAPVEIADHTFIAAGSTITDDVPEKAMAIARARQTNKENYWAKLPVAKDEEWQ.

The interval 1 to 230 (MVNKNAIILA…FEESMGVNDR (230 aa)) is pyrophosphorylase. UDP-N-acetyl-alpha-D-glucosamine contacts are provided by residues 9-12 (LAAG), K23, Q73, 78-79 (GT), 101-103 (SGD), G140, E155, N170, and N228. D103 is a Mg(2+) binding site. A Mg(2+)-binding site is contributed by N228. The tract at residues 231-251 (VALSQATKVMRQRINTAHMRN) is linker. The N-acetyltransferase stretch occupies residues 252 to 462 (GVTLIDPEST…LPVAKDEEWQ (211 aa)). UDP-N-acetyl-alpha-D-glucosamine-binding residues include R333 and K351. H363 functions as the Proton acceptor in the catalytic mechanism. Residues Y366 and N377 each contribute to the UDP-N-acetyl-alpha-D-glucosamine site. Acetyl-CoA contacts are provided by residues 386–387 (NY), S405, A423, and R440.

This sequence in the N-terminal section; belongs to the N-acetylglucosamine-1-phosphate uridyltransferase family. The protein in the C-terminal section; belongs to the transferase hexapeptide repeat family. As to quaternary structure, homotrimer. Mg(2+) serves as cofactor.

The protein resides in the cytoplasm. The enzyme catalyses alpha-D-glucosamine 1-phosphate + acetyl-CoA = N-acetyl-alpha-D-glucosamine 1-phosphate + CoA + H(+). It catalyses the reaction N-acetyl-alpha-D-glucosamine 1-phosphate + UTP + H(+) = UDP-N-acetyl-alpha-D-glucosamine + diphosphate. It functions in the pathway nucleotide-sugar biosynthesis; UDP-N-acetyl-alpha-D-glucosamine biosynthesis; N-acetyl-alpha-D-glucosamine 1-phosphate from alpha-D-glucosamine 6-phosphate (route II): step 2/2. The protein operates within nucleotide-sugar biosynthesis; UDP-N-acetyl-alpha-D-glucosamine biosynthesis; UDP-N-acetyl-alpha-D-glucosamine from N-acetyl-alpha-D-glucosamine 1-phosphate: step 1/1. It participates in bacterial outer membrane biogenesis; LPS lipid A biosynthesis. In terms of biological role, catalyzes the last two sequential reactions in the de novo biosynthetic pathway for UDP-N-acetylglucosamine (UDP-GlcNAc). The C-terminal domain catalyzes the transfer of acetyl group from acetyl coenzyme A to glucosamine-1-phosphate (GlcN-1-P) to produce N-acetylglucosamine-1-phosphate (GlcNAc-1-P), which is converted into UDP-GlcNAc by the transfer of uridine 5-monophosphate (from uridine 5-triphosphate), a reaction catalyzed by the N-terminal domain. The protein is Bifunctional protein GlmU of Latilactobacillus sakei subsp. sakei (strain 23K) (Lactobacillus sakei subsp. sakei).